Consider the following 135-residue polypeptide: UPF0299 membrane protein PC1_1498 (135 aa).

The next 4 membrane-spanning stretches (helical) occupy residues 5 to 25 (FIVCWQYLRAFALIYLCLLAG), 30 to 50 (ALLPFTIPGSIIGMLVLFTLL), 63 to 83 (GCHLLIRHMALLFVPIGVGVM), and 93 to 113 (FGPIVVSCLISTFIVMLVVGF).

The protein belongs to the UPF0299 family.

It is found in the cell inner membrane. In Pectobacterium carotovorum subsp. carotovorum (strain PC1), this protein is UPF0299 membrane protein PC1_1498.